A 69-amino-acid chain; its full sequence is Cold shock-like protein CspC (69 aa).

The CSD domain maps to 6-66 (GQVKWFNESK…GQKGPAAVNV (61 aa)).

The protein localises to the cytoplasm. The polypeptide is Cold shock-like protein CspC (cspC) (Buchnera aphidicola subsp. Acyrthosiphon pisum (strain APS) (Acyrthosiphon pisum symbiotic bacterium)).